A 948-amino-acid chain; its full sequence is MASSIRRGRGAWTRLLSLLLLAAWEVGSGQLRYSVPEEAKHGTFVGRIAQDLGLELEELVPRLFRVASKRHGDLLEVNLQNGILFVNSRIDREELCGRSAECSIHVEVIVDRPLQVFHVEVEVKDINDNPPIFPMTVKTIRFPESRLLDSRFPLEGASDADIGVNALLSYKLSSSEFFFLDIQANDELSESLSLVLGKSLDREETAEVNLLLVATDGGKPELTGTVQILIKVLDVNDNEPTFAQSVYKVKLLENTANGTLVVKLNASDADEGPNSEIVYSLGSDVSSTIQTKFTIDPISGEIRTKGKLDYEEAKSYEIQVTATDKGTPSMSGHCKISLKLVDINDNTPEVSITSLSLPISENASLGTVIALITVSDRDSGTNGHVTCSLTPHVPFKLVSTFKNYYSLVLDSALDRESVSAYELVVTARDGGSPSLWATTSVSIEVADVNDNAPAFAQPEYTVFVKENNPPGCHIFTVSAWDADAQENALVSYSLVERRVGERALSSYVSVHAESGKVYALQPLDHEEVELLQFQVSARDAGVPPLGSNVTLQVFVLDENDNAPALLAPRAGTAAGAVSELVPWSVGAGHVVAKVRAVDADSGYNAWLSYELQLGTGSARIPFRVGLYTGEISTTRALDEADSPRHRLLVLVKDHGEPALTATATVLVSLVESGQAPKASSRAWVGAAGSEATLVDVNVYLIIAICAVSSLLVLTVLLYTALRCSVPPTEGARAPGKPTLVCSSAVGSWSYSQQRRQRVCSGEDPPKTDLMAFSPSLSQGPDSAEEKQLSESEYVGKPRQPNPDWRYSASLRAGMHSSVHLEEAGILRAGPGGPDQQWPTVSSATPEPEAGEVSPPVGAGVNSNSWTFKYGPGNPKQSGPGELPDKFIIPGSPAIISIRQEPTNSQIDKSDFITFGKKEETKKKKKKKKGNKTQEKKEKGNSTTDNSDQ.

Positions 1–22 are cleaved as a signal peptide; that stretch reads MASSIRRGRGAWTRLLSLLLLA. Over 23-697 the chain is Extracellular; it reads AWEVGSGQLR…GSEATLVDVN (675 aa). Cadherin domains are found at residues 30–133, 157–242, 243–350, 351–455, 456–565, and 588–678; these read QLRY…PPIF, ASDA…EPTF, AQSV…TPEV, SITS…APAF, AQPE…APAL, and GHVV…APKA. N-linked (GlcNAc...) asparagine glycosylation is found at Asn257, Asn265, Asn362, and Asn548. Residues 698–718 form a helical membrane-spanning segment; sequence VYLIIAICAVSSLLVLTVLLY. Topologically, residues 719-948 are cytoplasmic; sequence TALRCSVPPT…GNSTTDNSDQ (230 aa). The PXXP 1 repeat unit spans residues 734 to 737; it reads PGKP. The tract at residues 734–892 is 5 X 4 AA repeats of P-X-X-P; it reads PGKPTLVCSS…PDKFIIPGSP (159 aa). 3 disordered regions span residues 754–801, 829–854, and 868–948; these read RRQR…RQPN, GPGG…EVSP, and KYGP…NSDQ. Residues 783-795 are compositionally biased toward basic and acidic residues; the sequence is AEEKQLSESEYVG. PXXP repeat units lie at residues 797 to 800, 830 to 833, 871 to 874, and 889 to 892; these read PRQP, PGGP, PGNP, and PGSP. Basic and acidic residues predominate over residues 907–921; that stretch reads DKSDFITFGKKEETK.

The protein localises to the cell membrane. Potential calcium-dependent cell-adhesion protein. May be involved in the establishment and maintenance of specific neuronal connections in the brain. This chain is Protocadherin alpha-2 (PCDHA2), found in Homo sapiens (Human).